The primary structure comprises 439 residues: MNKKFYITTLGCPKNTADSMSMHHSLLEEGFTPATFAEESDFHFINTCTFIQSATEETIQTILSAAQVKKQNHQKLVVVGCFAERYPDNISSEIPEVDLFFGTGRYAQAGKILREKFPDLSPPKREFNDSLLEKLKLSSEIENYSKPYAYVKVSDGCNRGCSFCIIPSFRGKFRESPVEDILRDVDRAIRAGAKEICLVSQDTVYYGRNSEVLLDMVRKVAEIDSLEVLRLLYLYPDKKTEKLLRLMGETPKIAPYLESPLQHVSSKILKSMNRVGESSTFKDLFALAREVKPGLEIRTSFIIGYPGEEPGDVDQVLRFIEETRPEKVNLFSYSPQEGTKGAELKQTVSEKEKSRRINLIRDVHLAILEEIHESRIGQTYDAIVDSVENDQAVVRRFQDAPEMDEVVYVDDISLIPGMIGKIRIDSFYEYDMNGTWISK.

Positions 3 to 118 (KKFYITTLGC…AGKILREKFP (116 aa)) constitute an MTTase N-terminal domain. 6 residues coordinate [4Fe-4S] cluster: cysteine 12, cysteine 48, cysteine 81, cysteine 157, cysteine 161, and cysteine 164. One can recognise a Radical SAM core domain in the interval 143 to 370 (NYSKPYAYVK…RDVHLAILEE (228 aa)). The TRAM domain maps to 373 to 438 (ESRIGQTYDA…EYDMNGTWIS (66 aa)).

It belongs to the methylthiotransferase family. RimO subfamily. [4Fe-4S] cluster is required as a cofactor.

It is found in the cytoplasm. It catalyses the reaction L-aspartate(89)-[ribosomal protein uS12]-hydrogen + (sulfur carrier)-SH + AH2 + 2 S-adenosyl-L-methionine = 3-methylsulfanyl-L-aspartate(89)-[ribosomal protein uS12]-hydrogen + (sulfur carrier)-H + 5'-deoxyadenosine + L-methionine + A + S-adenosyl-L-homocysteine + 2 H(+). Its function is as follows. Catalyzes the methylthiolation of an aspartic acid residue of ribosomal protein uS12. In Leptospira borgpetersenii serovar Hardjo-bovis (strain JB197), this protein is Ribosomal protein uS12 methylthiotransferase RimO.